The primary structure comprises 1045 residues: Fibrosin-1-like protein (1045 aa).

Residues 1-12 (MEAKVRPSRRSR) are compositionally biased toward basic residues. Disordered regions lie at residues 1 to 86 (MEAK…DGFA) and 99 to 315 (DMAL…THVP). The span at 13–28 (AQRDRGRRREAARDAR) shows a compositional bias: basic and acidic residues. A compositionally biased stretch (low complexity) spans 48–63 (GLRGAPPRGAAPAPRT). The segment covering 99-123 (DMALKPHERKEKWERRLIKKPRESE) has biased composition (basic and acidic residues). The span at 183–197 (EATSSRDPLSDSSAH) shows a compositional bias: polar residues. Over residues 270–280 (HAAPCPGPPPG) the composition is skewed to pro residues. The residue at position 340 (Ser-340) is a Phosphoserine. Positions 443-457 (QHTHQHTHQHTHQHQ) are enriched in basic residues. Disordered stretches follow at residues 443–462 (QHTH…TFAP) and 719–753 (EGSS…PKSV). Residues 741-750 (PSFPAPPPWP) show a composition bias toward pro residues. The residue at position 790 (Ser-790) is a Phosphoserine. Disordered regions lie at residues 809–880 (ELGR…APLQ) and 910–961 (AAAP…PALD). The segment covering 817-837 (AEREAEPRVKESRSPAKEEAA) has biased composition (basic and acidic residues). Residue Lys-858 forms a Glycyl lysine isopeptide (Lys-Gly) (interchain with G-Cter in SUMO2) linkage. The span at 910–922 (AAAPAPGSAALLE) shows a compositional bias: low complexity. The span at 923-949 (PPERPYRDREPHGYSPERLRGELERAR) shows a compositional bias: basic and acidic residues. 2 positions are modified to phosphoserine: Ser-937 and Ser-977. A phosphothreonine mark is found at Thr-989 and Thr-1010. The segment at 991 to 1045 (PAAAALGAPPPLVTAAGPPTPPGPPRSRTTPLGGLGPGEARDYSPSRNPPEVEAR) is disordered. Over residues 998-1015 (APPPLVTAAGPPTPPGPP) the composition is skewed to pro residues. A compositionally biased stretch (basic and acidic residues) spans 1029–1045 (EARDYSPSRNPPEVEAR).

This sequence belongs to the AUTS2 family.

The protein is Fibrosin-1-like protein (FBRSL1) of Homo sapiens (Human).